We begin with the raw amino-acid sequence, 418 residues long: Putative competence-damage inducible protein (418 aa).

The protein belongs to the CinA family.

This is Putative competence-damage inducible protein from Clostridioides difficile (strain 630) (Peptoclostridium difficile).